The following is a 350-amino-acid chain: MAFKITSSPHVSQGIQTATVMRRVALCLIPGILVQTLFFGFGSLIQLCLAIFTAYLGEALVLKARGRPILITLKDNSALVTASLLALSIPPLAPWWLVVIGSLFAIIIVKHLYGGLGHNLFNPAMAGYVVLLVSFPLQMTSWVAPQGIALNGVDALAAMKAIFAIGPSLGNDFYRLGVDGIAMATPLDTIKTDLSLGLTTLESFAKPIFDGSYGVGWFWVNLAYLAGGLVLLKLKVIRWHISVGILAALFVCASFGFLISPDTHVSPLFHWFSGGTMLAVFFIATDPVTAATSPRGRLIFGASIGIIIYLIRTYGGYPDAVAFAVLLANMCAPFIDHYVRPRTYGHRSAN.

3 helical membrane passes run 25 to 45 (ALCL…GSLI), 89 to 109 (IPPL…IIIV), and 124 to 144 (AMAG…SWVA). The residue at position 185 (T185) is an FMN phosphoryl threonine. 5 helical membrane-spanning segments follow: residues 212-232 (SYGV…LVLL), 239-259 (WHIS…GFLI), 265-285 (VSPL…FIAT), 298-318 (LIFG…GGYP), and 319-339 (DAVA…DHYV).

It belongs to the NqrB/RnfD family. The complex is composed of six subunits: RnfA, RnfB, RnfC, RnfD, RnfE and RnfG. It depends on FMN as a cofactor.

The protein localises to the cell inner membrane. In terms of biological role, part of a membrane-bound complex that couples electron transfer with translocation of ions across the membrane. The protein is Ion-translocating oxidoreductase complex subunit D of Shewanella denitrificans (strain OS217 / ATCC BAA-1090 / DSM 15013).